A 918-amino-acid chain; its full sequence is MFQKILTILFGSKYERDLKRLNPIVETINSFEVTIKAMDDETLSSQTKKFKERLASGETLDDILPEAFATVREVAYRTLGMRHFDVQMMGGISLHWGNISEMKTGEGKTLTSTLPIYLNSLSGEGVHVVTVNDYLAKRDANWMRPVFEFLKVSVGVIQHDMDHEERKVAYNSDITYGTNNEFGFDYLRDNMVSYKEHRVQRQHNFAIVDEVDSILIDEARTPLIISGPAEESTDKYLKVNKIIPKLVEGEDFEIDEKAKNVILSEAGVHHVEKLLEVDNLYHAENIELVHHVQQALKAHKIFFKDKDYVVQDGEVIIVDEFTGRLMKGRRYSDGLHQSLEAKEGVPIARESQTLASITFQNYFRIYKKLAGMTGTADTEAEEFKKIYNLDVIVIPSNLKIQRQDMPDRVYKTEREKFDAVVKDIQEKVSRKQPVLVGTISIEKSEVLSKLLFSHGIQHNVLNAKQHERESEIVANAGKPGAITIATNMAGRGTDIVLGGAPKYKDDLEKLDDKCDSLGIKNKEELEIIYSFRECLIKQKFDEAEGKISDVRNETIKKECIKILGDAKKWKVDHDFVIGAGGLHIIGSERHESRRIDNQLRGRSGRQGDPGSSRFYLSLQDDLMRIFGSDRIARIMDTLKMPEGQELEHSMVSNAIARAQKRVEGHNFDIRKHLLEYDDVMNRQRIYIYGIRNELLDKGNMSKTVFDFFDEVVENQVILYCEGNNADAWEIDSLNEWLQSLGIDHKIESKDFKKESNPQLKVFEVVSKLVKELYDYKVSSIGDEIWRSIERNVFLDILDHRWKEHLYAMDHLKEGIWTVGYGEKNPLIEYKLQGFKMFDQLVDNLKNEVVSFLLKIEVTESDKKQDDTSPKEYKKIGQEQRAEVDMFGNELKSNKTKPQVSSTTSSGGGSERRSSRRKK.

Residues glutamine 87, glycine 105–threonine 109, and aspartate 494 contribute to the ATP site. A compositionally biased stretch (basic and acidic residues) spans lysine 863–valine 883. A disordered region spans residues lysine 863 to lysine 918.

It belongs to the SecA family. In terms of assembly, monomer and homodimer. Part of the essential Sec protein translocation apparatus which comprises SecA, SecYEG and auxiliary proteins SecDF. Other proteins may also be involved.

Its subcellular location is the cell inner membrane. The protein localises to the cytoplasm. It carries out the reaction ATP + H2O + cellular proteinSide 1 = ADP + phosphate + cellular proteinSide 2.. Its function is as follows. Part of the Sec protein translocase complex. Interacts with the SecYEG preprotein conducting channel. Has a central role in coupling the hydrolysis of ATP to the transfer of proteins into and across the cell membrane, serving as an ATP-driven molecular motor driving the stepwise translocation of polypeptide chains across the membrane. The polypeptide is Protein translocase subunit SecA (Leptospira biflexa serovar Patoc (strain Patoc 1 / Ames)).